Here is a 174-residue protein sequence, read N- to C-terminus: Transcriptional repressor NrdR (174 aa).

Residues 3 to 34 (CPFCQHNDTRVIDSRVSEDGTTIRRRRECEAC) fold into a zinc finger. The ATP-cone domain maps to 49-139 (PTVVKSDGGR…VYRSFQDVAD (91 aa)).

This sequence belongs to the NrdR family. The cofactor is Zn(2+).

Negatively regulates transcription of bacterial ribonucleotide reductase nrd genes and operons by binding to NrdR-boxes. The protein is Transcriptional repressor NrdR of Xanthomonas axonopodis pv. citri (strain 306).